The chain runs to 274 residues: Penicillin-insensitive murein endopeptidase (274 aa).

The signal sequence occupies residues 1-19; that stretch reads MNKTAIALLALLASSASLA. Intrachain disulfides connect Cys-44/Cys-265, Cys-187/Cys-235, and Cys-216/Cys-223. His-110, His-113, Asp-120, Asp-147, His-150, and His-211 together coordinate Zn(2+). The interval 227–274 is disordered; that stretch reads PLPPPGDGCGAELQSWFEPPKPGTTKPEKKTPPPLPPSCQALLDEHVI.

It belongs to the peptidase M74 family. As to quaternary structure, dimer. Zn(2+) serves as cofactor.

It is found in the periplasm. In terms of biological role, murein endopeptidase that cleaves the D-alanyl-meso-2,6-diamino-pimelyl amide bond that connects peptidoglycan strands. Likely plays a role in the removal of murein from the sacculus. The chain is Penicillin-insensitive murein endopeptidase from Escherichia coli O9:H4 (strain HS).